The sequence spans 81 residues: Protein Vpu (81 aa).

Residues 1–7 lie on the Extracellular side of the membrane; that stretch reads MQPLVII. The helical transmembrane segment at 8 to 28 threads the bilayer; that stretch reads AIAALVVAIIIAIVVWTIVYI. Topologically, residues 29–81 are cytoplasmic; it reads EYRRIKRQRKIDCLIDRIRERAEDSGNESEGEREELSKLVEMGHHAPWDVDDL. The disordered stretch occupies residues 50–81; it reads AEDSGNESEGEREELSKLVEMGHHAPWDVDDL. A phosphoserine; by host CK2 mark is found at serine 53 and serine 57. Residues 62–81 are compositionally biased toward basic and acidic residues; sequence EELSKLVEMGHHAPWDVDDL.

Belongs to the HIV-1 VPU protein family. As to quaternary structure, homopentamer. Interacts with host CD4 and BRTC; these interactions induce proteasomal degradation of CD4. Interacts with host BST2; this interaction leads to the degradation of host BST2. Interacts with host FBXW11. Interacts with host AP1M1; this interaction plays a role in the mistrafficking and subsequent degradation of host BST2. Interacts with host RANBP2; this interaction allows Vpu to down-regulate host BLM sumoylation. Phosphorylated by host CK2. This phosphorylation is necessary for interaction with human BTRC and degradation of CD4.

Its subcellular location is the host membrane. With respect to regulation, ion channel activity is inhibited by hexamethylene amiloride in vitro. Enhances virion budding by targeting host CD4 and Tetherin/BST2 to proteasome degradation. Degradation of CD4 prevents any unwanted premature interactions between viral Env and its host receptor CD4 in the endoplasmic reticulum. Degradation of antiretroviral protein Tetherin/BST2 is important for virion budding, as BST2 tethers new viral particles to the host cell membrane. Mechanistically, Vpu bridges either CD4 or BST2 to BTRC, a substrate recognition subunit of the Skp1/Cullin/F-box protein E3 ubiquitin ligase, induces their ubiquitination and subsequent proteasomal degradation. The alteration of the E3 ligase specificity by Vpu seems to promote the degradation of host IKBKB, leading to NF-kappa-B down-regulation and subsequent apoptosis. Acts as a viroporin that forms an oligomeric ion channel in membranes. Modulates the host DNA repair mechanisms to promote degradation of nuclear viral cDNA in cells that are already productively infected in order to suppress immune sensing and proviral hyper-integration (superinfection). Manipulates PML-NBs and modulates SUMOylation of host BLM protein thereby enhancing its DNA-end processing activity toward viral unintegrated linear DNA. Also inhibits RAD52-mediated homologous repair of viral cDNA, preventing the generation of dead-end circular forms of single copies of the long terminal repeat and permitting sustained nucleolytic attack. In Human immunodeficiency virus type 1 group M subtype D (isolate NDK) (HIV-1), this protein is Protein Vpu.